Reading from the N-terminus, the 250-residue chain is uncharacterized protein (250 aa).

An N-terminal signal peptide occupies residues 1–24 (MKGFLKPNFSLGALFLTLSPIATA). A lipid anchor (N-palmitoyl cysteine) is attached at C25. Residue C25 is the site of S-diacylglycerol cysteine attachment. Positions 44-200 (RLRKARVNHW…FNNRKNIFSY (157 aa)) constitute a TNase-like domain.

Its subcellular location is the cell membrane. This is an uncharacterized protein from Mycoplasma genitalium (strain ATCC 33530 / DSM 19775 / NCTC 10195 / G37) (Mycoplasmoides genitalium).